Consider the following 599-residue polypeptide: Chaperone protein DnaK (599 aa).

T187 is modified (phosphothreonine; by autocatalysis). The segment at 575–599 (AQQAATENSKDSDTVEAEIVDDKAN) is disordered.

The protein belongs to the heat shock protein 70 family.

Acts as a chaperone. In Mycoplasmopsis pulmonis (strain UAB CTIP) (Mycoplasma pulmonis), this protein is Chaperone protein DnaK.